Here is a 222-residue protein sequence, read N- to C-terminus: Probable transaldolase (222 aa).

Lys-91 functions as the Schiff-base intermediate with substrate in the catalytic mechanism.

It belongs to the transaldolase family. Type 3B subfamily.

It is found in the cytoplasm. It carries out the reaction D-sedoheptulose 7-phosphate + D-glyceraldehyde 3-phosphate = D-erythrose 4-phosphate + beta-D-fructose 6-phosphate. It participates in carbohydrate degradation; pentose phosphate pathway; D-glyceraldehyde 3-phosphate and beta-D-fructose 6-phosphate from D-ribose 5-phosphate and D-xylulose 5-phosphate (non-oxidative stage): step 2/3. In terms of biological role, transaldolase is important for the balance of metabolites in the pentose-phosphate pathway. The polypeptide is Probable transaldolase (Chlorobium phaeovibrioides (strain DSM 265 / 1930) (Prosthecochloris vibrioformis (strain DSM 265))).